Consider the following 173-residue polypeptide: ATP synthase subunit b (173 aa).

A helical transmembrane segment spans residues G15 to L35.

This sequence belongs to the ATPase B chain family. As to quaternary structure, F-type ATPases have 2 components, F(1) - the catalytic core - and F(0) - the membrane proton channel. F(1) has five subunits: alpha(3), beta(3), gamma(1), delta(1), epsilon(1). F(0) has three main subunits: a(1), b(2) and c(10-14). The alpha and beta chains form an alternating ring which encloses part of the gamma chain. F(1) is attached to F(0) by a central stalk formed by the gamma and epsilon chains, while a peripheral stalk is formed by the delta and b chains.

The protein localises to the cell membrane. F(1)F(0) ATP synthase produces ATP from ADP in the presence of a proton or sodium gradient. F-type ATPases consist of two structural domains, F(1) containing the extramembraneous catalytic core and F(0) containing the membrane proton channel, linked together by a central stalk and a peripheral stalk. During catalysis, ATP synthesis in the catalytic domain of F(1) is coupled via a rotary mechanism of the central stalk subunits to proton translocation. Its function is as follows. Component of the F(0) channel, it forms part of the peripheral stalk, linking F(1) to F(0). This is ATP synthase subunit b from Staphylococcus aureus (strain MSSA476).